Consider the following 332-residue polypeptide: L-lactate dehydrogenase A chain (332 aa).

Residues 29–57 and R99 contribute to the NAD(+) site; that span reads GMVG…MEDK. 3 residues coordinate substrate: R106, N138, and R169. Position 138 (N138) interacts with NAD(+). Catalysis depends on H193, which acts as the Proton acceptor. Residue T248 participates in substrate binding.

Belongs to the LDH/MDH superfamily. LDH family. As to quaternary structure, homotetramer.

The protein resides in the cytoplasm. It catalyses the reaction (S)-lactate + NAD(+) = pyruvate + NADH + H(+). Its pathway is fermentation; pyruvate fermentation to lactate; (S)-lactate from pyruvate: step 1/1. In terms of biological role, interconverts simultaneously and stereospecifically pyruvate and lactate with concomitant interconversion of NADH and NAD(+). In Sphyraena lucasana (Lucas barracuda), this protein is L-lactate dehydrogenase A chain (ldha).